A 437-amino-acid chain; its full sequence is Methionine aminopeptidase 2 (437 aa).

Residues methionine 1 to glycine 90 are disordered. Residues glutamate 10–lysine 20 show a composition bias toward basic and acidic residues. The span at serine 31 to glutamate 42 shows a compositional bias: acidic residues. Residues alanine 52–alanine 66 are compositionally biased toward basic residues. Position 190 (histidine 190) interacts with substrate. A divalent metal cation contacts are provided by aspartate 210, aspartate 221, and histidine 290. Histidine 298 serves as a coordination point for substrate. The a divalent metal cation site is built by glutamate 323 and glutamate 418.

Belongs to the peptidase M24A family. Methionine aminopeptidase eukaryotic type 2 subfamily. Co(2+) is required as a cofactor. Zn(2+) serves as cofactor. Requires Mn(2+) as cofactor. It depends on Fe(2+) as a cofactor.

It is found in the cytoplasm. The enzyme catalyses Release of N-terminal amino acids, preferentially methionine, from peptides and arylamides.. Cotranslationally removes the N-terminal methionine from nascent proteins. The N-terminal methionine is often cleaved when the second residue in the primary sequence is small and uncharged (Met-Ala-, Cys, Gly, Pro, Ser, Thr, or Val). In Neurospora crassa (strain ATCC 24698 / 74-OR23-1A / CBS 708.71 / DSM 1257 / FGSC 987), this protein is Methionine aminopeptidase 2.